The following is a 181-amino-acid chain: Histone deacetylase complex subunit SAP30L-B (181 aa).

2 cysteine pairs are disulfide-bonded: Cys26–Cys27 and Cys35–Cys71. The segment at 26 to 74 adopts an Atypical zinc-finger fold; it reads CCLIDGGERCPRPAGNASFSKRVQKSISQKKLKLDIDKSVRHLYICDFH. The segment at 82–103 is disordered; that stretch reads RNKRKRKTSDDGGDSPEHETDV. A Nuclear localization signal (NLS) motif is present at residues 83-88; it reads NKRKRK. Residues 85–87 are important for DNA and phosphoinositide binding; sequence RKR.

This sequence belongs to the SAP30 family. In terms of assembly, interacts with components of the histone deacetylase complex sin3a, hdac1 and hdac2. Binds histones and nucleosomes.

It is found in the nucleus. It localises to the nucleolus. Functionally, functions as a transcription repressor, probably via its interaction with histone deacetylase complexes. Involved in the functional recruitment of the class 1 Sin3-histone deacetylase complex (HDAC) to the nucleolus. Binds DNA, apparently without sequence-specificity, and bends bound double-stranded DNA. Binds phosphoinositol phosphates (phosphoinositol 3-phosphate, phosphoinositol 4-phosphate and phosphoinositol 5-phosphate) via the same basic sequence motif that mediates DNA binding and nuclear import. This chain is Histone deacetylase complex subunit SAP30L-B (sap30l-b), found in Xenopus laevis (African clawed frog).